Consider the following 330-residue polypeptide: Inorganic pyrophosphatase 2, mitochondrial (330 aa).

A mitochondrion-targeting transit peptide spans 1 to 27 (MRALLPLLSVGRGWRVGAAARPPRRVM). Mg(2+) is bound by residues aspartate 159, aspartate 164, and aspartate 196. Position 211 is an N6-succinyllysine (lysine 211). Residue lysine 219 is modified to N6-acetyllysine. N6-succinyllysine is present on lysine 254. The residue at position 256 (lysine 256) is an N6-acetyllysine.

This sequence belongs to the PPase family. As to quaternary structure, homodimer. Mg(2+) is required as a cofactor.

It localises to the mitochondrion. It catalyses the reaction diphosphate + H2O = 2 phosphate + H(+). Hydrolyzes inorganic pyrophosphate. This activity is essential for correct regulation of mitochondrial membrane potential, and mitochondrial organization and function. The polypeptide is Inorganic pyrophosphatase 2, mitochondrial (Ppa2) (Mus musculus (Mouse)).